Reading from the N-terminus, the 294-residue chain is Acetyl-coenzyme A carboxylase carboxyl transferase subunit beta (294 aa).

Residues 25-294 (VWTKCTACEQ…PFLEPEIIAD (270 aa)) form the CoA carboxyltransferase N-terminal domain. Residues C29, C32, C48, and C51 each contribute to the Zn(2+) site. The C4-type zinc finger occupies 29–51 (CTACEQVLYRDELKRHLEVCPKC).

Belongs to the AccD/PCCB family. As to quaternary structure, acetyl-CoA carboxylase is a heterohexamer composed of biotin carboxyl carrier protein (AccB), biotin carboxylase (AccC) and two subunits each of ACCase subunit alpha (AccA) and ACCase subunit beta (AccD). Requires Zn(2+) as cofactor.

It is found in the cytoplasm. The catalysed reaction is N(6)-carboxybiotinyl-L-lysyl-[protein] + acetyl-CoA = N(6)-biotinyl-L-lysyl-[protein] + malonyl-CoA. Its pathway is lipid metabolism; malonyl-CoA biosynthesis; malonyl-CoA from acetyl-CoA: step 1/1. Its function is as follows. Component of the acetyl coenzyme A carboxylase (ACC) complex. Biotin carboxylase (BC) catalyzes the carboxylation of biotin on its carrier protein (BCCP) and then the CO(2) group is transferred by the transcarboxylase to acetyl-CoA to form malonyl-CoA. In Actinobacillus succinogenes (strain ATCC 55618 / DSM 22257 / CCUG 43843 / 130Z), this protein is Acetyl-coenzyme A carboxylase carboxyl transferase subunit beta.